Here is a 209-residue protein sequence, read N- to C-terminus: uncharacterized protein (209 aa).

An N-terminal signal peptide occupies residues 1–17; it reads MKRLVTGLLALSLFLAA. The tract at residues 17–105 is disordered; that stretch reads ACGQDSDQQK…SNNQANNNQK (89 aa). Cys18 is lipidated: N-palmitoyl cysteine. Cys18 carries S-diacylglycerol cysteine lipidation. Over residues 23-70 the composition is skewed to basic and acidic residues; it reads DQQKDGNKEKDDKAKTEQQDKKTNDSSKDKKDNKDDSKDVNKDNKDNS. The span at 71–105 shows a compositional bias: low complexity; sequence ANDNQQQSNSNATNNDQNQTNNNQSSNNQANNNQK.

It localises to the cell membrane. This is an uncharacterized protein from Staphylococcus aureus (strain COL).